The following is a 201-amino-acid chain: NADH-ubiquinone oxidoreductase chain 6 (201 aa).

5 helical membrane-spanning segments follow: residues 4–24, 28–48, 55–75, 88–108, and 151–171; these read LVLF…VISV, VFSV…LLLL, LLFL…VVMI, FYYA…IFII, and LFIL…ILTL.

This sequence belongs to the complex I subunit 6 family.

The protein resides in the mitochondrion membrane. The enzyme catalyses a ubiquinone + NADH + 5 H(+)(in) = a ubiquinol + NAD(+) + 4 H(+)(out). Its function is as follows. Core subunit of the mitochondrial membrane respiratory chain NADH dehydrogenase (Complex I) that is believed to belong to the minimal assembly required for catalysis. Complex I functions in the transfer of electrons from NADH to the respiratory chain. The immediate electron acceptor for the enzyme is believed to be ubiquinone. This Cyanidium caldarium (Red alga) protein is NADH-ubiquinone oxidoreductase chain 6 (ND6).